The sequence spans 101 residues: Ubiquitin-related modifier 1 homolog (101 aa).

At G101 the chain carries 1-thioglycine. G101 is covalently cross-linked (Glycyl lysine isopeptide (Gly-Lys) (interchain with K-? in acceptor proteins)).

Belongs to the URM1 family. Interacts with cer. Post-translationally, C-terminal thiocarboxylation occurs in 2 steps, it is first acyl-adenylated (-COAMP) via the hesA/moeB/thiF part of the MOCS3 homolog, then thiocarboxylated (-COSH) via the rhodanese domain of the MOCS3 homolog.

The protein localises to the cytoplasm. Its pathway is tRNA modification; 5-methoxycarbonylmethyl-2-thiouridine-tRNA biosynthesis. Functionally, acts as a sulfur carrier required for 2-thiolation of mcm(5)S(2)U at tRNA wobble positions of cytosolic tRNA(Lys), tRNA(Glu) and tRNA(Gln). Serves as sulfur donor in tRNA 2-thiolation reaction by being thiocarboxylated (-COSH) at its C-terminus by MOCS3. The sulfur is then transferred to tRNA to form 2-thiolation of mcm(5)S(2)U. Also acts as a ubiquitin-like protein (UBL) that is covalently conjugated via an isopeptide bond to lysine residues of target proteins such as Prx2/Jafrac1, Ciao1, Eip71CD and GILT1. The thiocarboxylated form serves as substrate for conjugation and oxidative stress specifically induces the formation of UBL-protein conjugates. This is Ubiquitin-related modifier 1 homolog from Drosophila yakuba (Fruit fly).